The following is a 635-amino-acid chain: Biosynthetic arginine decarboxylase (635 aa).

Lysine 100 carries the N6-(pyridoxal phosphate)lysine modification. 282–292 (VDIGGGLGVDY) serves as a coordination point for substrate.

It belongs to the Orn/Lys/Arg decarboxylase class-II family. SpeA subfamily. Mg(2+) is required as a cofactor. It depends on pyridoxal 5'-phosphate as a cofactor.

The enzyme catalyses L-arginine + H(+) = agmatine + CO2. The protein operates within amine and polyamine biosynthesis; agmatine biosynthesis; agmatine from L-arginine: step 1/1. In terms of biological role, catalyzes the biosynthesis of agmatine from arginine. This Geobacter metallireducens (strain ATCC 53774 / DSM 7210 / GS-15) protein is Biosynthetic arginine decarboxylase.